Here is a 265-residue protein sequence, read N- to C-terminus: Shikimate dehydrogenase (NADP(+)) (265 aa).

Shikimate is bound by residues 15–17 (SLS) and Thr62. Residue Lys66 is the Proton acceptor of the active site. Glu78 is a binding site for NADP(+). Asn87 and Asp102 together coordinate shikimate. Residues 126–130 (GAGGV), 150–155 (NRTELK), and Val210 contribute to the NADP(+) site. Position 212 (Tyr212) interacts with shikimate. Position 233 (Gly233) interacts with NADP(+).

The protein belongs to the shikimate dehydrogenase family. Homodimer.

It catalyses the reaction shikimate + NADP(+) = 3-dehydroshikimate + NADPH + H(+). The protein operates within metabolic intermediate biosynthesis; chorismate biosynthesis; chorismate from D-erythrose 4-phosphate and phosphoenolpyruvate: step 4/7. In terms of biological role, involved in the biosynthesis of the chorismate, which leads to the biosynthesis of aromatic amino acids. Catalyzes the reversible NADPH linked reduction of 3-dehydroshikimate (DHSA) to yield shikimate (SA). The polypeptide is Shikimate dehydrogenase (NADP(+)) (Pelagibacter ubique (strain HTCC1062)).